We begin with the raw amino-acid sequence, 341 residues long: Ketol-acid reductoisomerase (NADP(+)) (341 aa).

Residues T2–T182 form the KARI N-terminal Rossmann domain. Residues Y25–Q28, K48, S51, S53, and D83–Q86 each bind NADP(+). H108 is a catalytic residue. G134 is a binding site for NADP(+). One can recognise a KARI C-terminal knotted domain in the interval T183–N328. 4 residues coordinate Mg(2+): D191, E195, E227, and E231. S252 serves as a coordination point for substrate.

Belongs to the ketol-acid reductoisomerase family. The cofactor is Mg(2+).

The enzyme catalyses (2R)-2,3-dihydroxy-3-methylbutanoate + NADP(+) = (2S)-2-acetolactate + NADPH + H(+). It catalyses the reaction (2R,3R)-2,3-dihydroxy-3-methylpentanoate + NADP(+) = (S)-2-ethyl-2-hydroxy-3-oxobutanoate + NADPH + H(+). It functions in the pathway amino-acid biosynthesis; L-isoleucine biosynthesis; L-isoleucine from 2-oxobutanoate: step 2/4. The protein operates within amino-acid biosynthesis; L-valine biosynthesis; L-valine from pyruvate: step 2/4. In terms of biological role, involved in the biosynthesis of branched-chain amino acids (BCAA). Catalyzes an alkyl-migration followed by a ketol-acid reduction of (S)-2-acetolactate (S2AL) to yield (R)-2,3-dihydroxy-isovalerate. In the isomerase reaction, S2AL is rearranged via a Mg-dependent methyl migration to produce 3-hydroxy-3-methyl-2-ketobutyrate (HMKB). In the reductase reaction, this 2-ketoacid undergoes a metal-dependent reduction by NADPH to yield (R)-2,3-dihydroxy-isovalerate. This Clavibacter michiganensis subsp. michiganensis (strain NCPPB 382) protein is Ketol-acid reductoisomerase (NADP(+)).